The following is a 102-amino-acid chain: NADH-quinone oxidoreductase subunit K (102 aa).

3 consecutive transmembrane segments (helical) span residues 5 to 25, 31 to 51, and 62 to 82; these read LAHYLILGAILFAIGIFGIFL, IILLMSIELMLLAVNMNFVAF, and VFVFFILTVAAAEAAIGLAIL.

Belongs to the complex I subunit 4L family. In terms of assembly, NDH-1 is composed of 14 different subunits. Subunits NuoA, H, J, K, L, M, N constitute the membrane sector of the complex.

The protein resides in the cell inner membrane. It catalyses the reaction a quinone + NADH + 5 H(+)(in) = a quinol + NAD(+) + 4 H(+)(out). NDH-1 shuttles electrons from NADH, via FMN and iron-sulfur (Fe-S) centers, to quinones in the respiratory chain. The immediate electron acceptor for the enzyme in this species is believed to be ubiquinone. Couples the redox reaction to proton translocation (for every two electrons transferred, four hydrogen ions are translocated across the cytoplasmic membrane), and thus conserves the redox energy in a proton gradient. The protein is NADH-quinone oxidoreductase subunit K of Bordetella avium (strain 197N).